Here is a 397-residue protein sequence, read N- to C-terminus: Succinyl-diaminopimelate desuccinylase (397 aa).

H73 provides a ligand contact to Zn(2+). The active site involves D75. Residue D106 coordinates Zn(2+). Residue E140 is the Proton acceptor of the active site. E141, E169, and H366 together coordinate Zn(2+).

Belongs to the peptidase M20A family. DapE subfamily. Homodimer. Zn(2+) is required as a cofactor. It depends on Co(2+) as a cofactor.

It carries out the reaction N-succinyl-(2S,6S)-2,6-diaminopimelate + H2O = (2S,6S)-2,6-diaminopimelate + succinate. It functions in the pathway amino-acid biosynthesis; L-lysine biosynthesis via DAP pathway; LL-2,6-diaminopimelate from (S)-tetrahydrodipicolinate (succinylase route): step 3/3. In terms of biological role, catalyzes the hydrolysis of N-succinyl-L,L-diaminopimelic acid (SDAP), forming succinate and LL-2,6-diaminopimelate (DAP), an intermediate involved in the bacterial biosynthesis of lysine and meso-diaminopimelic acid, an essential component of bacterial cell walls. This chain is Succinyl-diaminopimelate desuccinylase, found in Rhizobium meliloti (strain 1021) (Ensifer meliloti).